A 324-amino-acid polypeptide reads, in one-letter code: tRNA N6-adenosine threonylcarbamoyltransferase (324 aa).

Fe cation-binding residues include histidine 107, histidine 111, and tyrosine 127. Substrate contacts are provided by residues 127 to 131 (YVSGG), aspartate 159, glycine 172, glutamate 176, and asparagine 257. Aspartate 285 is a binding site for Fe cation.

This sequence belongs to the KAE1 / TsaD family. Monomer. Component of the KEOPS complex that consists of Kae1, Bud32, Cgi121 and Pcc1; the whole complex dimerizes. Fe(2+) serves as cofactor.

The protein localises to the cytoplasm. The catalysed reaction is L-threonylcarbamoyladenylate + adenosine(37) in tRNA = N(6)-L-threonylcarbamoyladenosine(37) in tRNA + AMP + H(+). Its function is as follows. Required for the formation of a threonylcarbamoyl group on adenosine at position 37 (t(6)A37) in tRNAs that read codons beginning with adenine. Is a component of the KEOPS complex that is probably involved in the transfer of the threonylcarbamoyl moiety of threonylcarbamoyl-AMP (TC-AMP) to the N6 group of A37. Kae1 likely plays a direct catalytic role in this reaction, but requires other protein(s) of the complex to fulfill this activity. In vitro, binds tRNA, ssRNA, both single- and double-stranded DNA, and exhibits a low ATPase activity. This Pyrococcus abyssi (strain GE5 / Orsay) protein is tRNA N6-adenosine threonylcarbamoyltransferase.